A 187-amino-acid chain; its full sequence is Crossover junction endodeoxyribonuclease RuvC (187 aa).

Residues Asp-7, Glu-67, and Asp-140 contribute to the active site. Residues Asp-7, Glu-67, and Asp-140 each coordinate Mg(2+).

The protein belongs to the RuvC family. As to quaternary structure, homodimer which binds Holliday junction (HJ) DNA. The HJ becomes 2-fold symmetrical on binding to RuvC with unstacked arms; it has a different conformation from HJ DNA in complex with RuvA. In the full resolvosome a probable DNA-RuvA(4)-RuvB(12)-RuvC(2) complex forms which resolves the HJ. Mg(2+) serves as cofactor.

Its subcellular location is the cytoplasm. The enzyme catalyses Endonucleolytic cleavage at a junction such as a reciprocal single-stranded crossover between two homologous DNA duplexes (Holliday junction).. Its function is as follows. The RuvA-RuvB-RuvC complex processes Holliday junction (HJ) DNA during genetic recombination and DNA repair. Endonuclease that resolves HJ intermediates. Cleaves cruciform DNA by making single-stranded nicks across the HJ at symmetrical positions within the homologous arms, yielding a 5'-phosphate and a 3'-hydroxyl group; requires a central core of homology in the junction. The consensus cleavage sequence is 5'-(A/T)TT(C/G)-3'. Cleavage occurs on the 3'-side of the TT dinucleotide at the point of strand exchange. HJ branch migration catalyzed by RuvA-RuvB allows RuvC to scan DNA until it finds its consensus sequence, where it cleaves and resolves the cruciform DNA. The polypeptide is Crossover junction endodeoxyribonuclease RuvC (Chlorobaculum parvum (strain DSM 263 / NCIMB 8327) (Chlorobium vibrioforme subsp. thiosulfatophilum)).